The chain runs to 347 residues: Microfibril-associated glycoprotein 3 (347 aa).

An N-terminal signal peptide occupies residues 1–22 (MKLHYCLCILLVVTFVPTALVL). At 23 to 139 (EDVTPLGTNQ…TLRVIFTSGD (117 aa)) the chain is on the extracellular side. N-linked (GlcNAc...) asparagine glycans are attached at residues Asn31, Asn36, Asn63, and Asn103. The Ig-like C2-type domain occupies 47–130 (AGSYSGDDVI…SPTRASYSVT (84 aa)). The cysteines at positions 68 and 117 are disulfide-linked. A helical membrane pass occupies residues 140 to 160 (MSVYYMVVCLIAFTITLILNV). The Cytoplasmic portion of the chain corresponds to 161–347 (TRLCLMSTHL…SAEGSTHHRE (187 aa)). Residues 280–347 (NPELGRSNSP…SAEGSTHHRE (68 aa)) are disordered. Positions 311–331 (VHLQSETKSIGTDSQDSSHFS) are enriched in polar residues.

Glycosylated.

The protein localises to the cell membrane. Component of the elastin-associated microfibrils. In Rattus norvegicus (Rat), this protein is Microfibril-associated glycoprotein 3 (Mfap3).